The primary structure comprises 295 residues: 33 kDa chaperonin (295 aa).

2 disulfide bridges follow: Cys-237–Cys-239 and Cys-270–Cys-273.

This sequence belongs to the HSP33 family. Under oxidizing conditions two disulfide bonds are formed involving the reactive cysteines. Under reducing conditions zinc is bound to the reactive cysteines and the protein is inactive.

The protein resides in the cytoplasm. Its function is as follows. Redox regulated molecular chaperone. Protects both thermally unfolding and oxidatively damaged proteins from irreversible aggregation. Plays an important role in the bacterial defense system toward oxidative stress. The sequence is that of 33 kDa chaperonin from Shouchella clausii (strain KSM-K16) (Alkalihalobacillus clausii).